The following is a 511-amino-acid chain: Probable G-protein coupled receptor 101 (511 aa).

Residues 1-35 (MPPSCTNSTQENNGSRVCLPLSKMPISVAHGIIRS) lie on the Extracellular side of the membrane. Asn-7 and Asn-13 each carry an N-linked (GlcNAc...) asparagine glycan. A helical transmembrane segment spans residues 36–56 (VVLLVILGVAFLGNVVLGYVL). Over 57–67 (HRKPNLLQVTN) the chain is Cytoplasmic. The helical transmembrane segment at 68 to 90 (RFIFNLLVTDLLQVALVAPWVVS) threads the bilayer. Residues 91–106 (TAIPFFWPLNIHFCTA) lie on the Extracellular side of the membrane. A disulfide bridge connects residues Cys-104 and Cys-182. Residues 107 to 127 (LVSLTHLFAFASVNTIVVVSV) traverse the membrane as a helical segment. Residues 128-149 (DRYLTIIHPLSYPSKMTNRRSY) are Cytoplasmic-facing. The helical transmembrane segment at 150-170 (ILLYGTWIAAFLQSTPPLYGW) threads the bilayer. Topologically, residues 171 to 196 (GHATFDDRNAFCSMIWGASPAYTVVS) are extracellular. Residues 197-217 (VVSFLVIPLGVMIACYSVVFG) traverse the membrane as a helical segment. The Cytoplasmic segment spans residues 218-398 (AARRQQALLY…PPCYECKAAR (181 aa)). A compositionally biased stretch (basic and acidic residues) spans 240–261 (DSVVHENEEGAKKRDEFQDKNE). Disordered regions lie at residues 240–315 (DSVV…EVSN) and 367–386 (EAMRIPESSPPSRRNSTSDP). Polar residues predominate over residues 376-385 (PPSRRNSTSD). The chain crosses the membrane as a helical span at residues 399–419 (VIFVIISTYVLSLGPYCFLAV). Topologically, residues 420 to 432 (LAVWVDIDTRVPQ) are extracellular. The chain crosses the membrane as a helical span at residues 433-453 (WVITIIIWLFFLQCCIHPYVY). At 454–511 (GYMHKSIKKEIQEVLKKLICKKSPPVEDSHPDLHETEAGTEGGIEGKAVPSHDSATSP) the chain is on the cytoplasmic side. Residues 476–511 (SPPVEDSHPDLHETEAGTEGGIEGKAVPSHDSATSP) form a disordered region. Residues 477-490 (PPVEDSHPDLHETE) show a composition bias toward basic and acidic residues.

This sequence belongs to the G-protein coupled receptor 1 family. As to expression, expressed in the brain in hypothalamus.

It is found in the cell membrane. Orphan receptor. This Mus musculus (Mouse) protein is Probable G-protein coupled receptor 101 (Gpr101).